Here is a 215-residue protein sequence, read N- to C-terminus: Pyrophosphatase PpaX (215 aa).

Asp-9 functions as the Nucleophile in the catalytic mechanism.

It belongs to the HAD-like hydrolase superfamily. PpaX family. Requires Mg(2+) as cofactor.

The enzyme catalyses diphosphate + H2O = 2 phosphate + H(+). Functionally, hydrolyzes pyrophosphate formed during P-Ser-HPr dephosphorylation by HPrK/P. Might play a role in controlling the intracellular pyrophosphate pool. The polypeptide is Pyrophosphatase PpaX (Bacillus mycoides (strain KBAB4) (Bacillus weihenstephanensis)).